The chain runs to 189 residues: Potassium-transporting ATPase KdpC subunit (189 aa).

Residues 5 to 25 (LLPALTMLLVFTVITGIVYPL) traverse the membrane as a helical segment.

It belongs to the KdpC family. The system is composed of three essential subunits: KdpA, KdpB and KdpC.

The protein resides in the cell membrane. Its function is as follows. Part of the high-affinity ATP-driven potassium transport (or Kdp) system, which catalyzes the hydrolysis of ATP coupled with the electrogenic transport of potassium into the cytoplasm. This subunit acts as a catalytic chaperone that increases the ATP-binding affinity of the ATP-hydrolyzing subunit KdpB by the formation of a transient KdpB/KdpC/ATP ternary complex. This chain is Potassium-transporting ATPase KdpC subunit, found in Mycobacterium bovis (strain ATCC BAA-935 / AF2122/97).